Reading from the N-terminus, the 364-residue chain is Sorbitol dehydrogenase (364 aa).

Cys54 serves as a coordination point for Zn(2+). A substrate-binding site is contributed by Tyr60. Zn(2+) is bound by residues His79 and Glu80. Glu165 contacts substrate. NAD(+)-binding positions include Ile193, Asp213, Arg218, 284–286, and 308–310; these read VGM and VFR. 2 residues coordinate substrate: Arg310 and Tyr311.

This sequence belongs to the zinc-containing alcohol dehydrogenase family. In terms of assembly, homotetramer. It depends on Zn(2+) as a cofactor. Mostly expressed in dry seeds and leaves, and, to a lower extent, in roots, stems, flowers and siliques (at protein level).

It is found in the mitochondrion membrane. The protein localises to the cell membrane. The protein resides in the cytoplasm. Its subcellular location is the cytosol. The catalysed reaction is keto-D-fructose + NADH + H(+) = D-sorbitol + NAD(+). It carries out the reaction ribitol + NAD(+) = D-ribulose + NADH + H(+). The enzyme catalyses xylitol + NAD(+) = D-xylulose + NADH + H(+). Polyol dehydrogenase that catalyzes the NAD(+)-dependent oxidation of various sugar alcohols. Is mostly active with D-sorbitol (D-glucitol), ribitol and xylitol as substrates, leading to the C2-oxidized products D-fructose, D-ribulose and D-xylulose, respectively. To a lesser extent, can also oxidize arabitol, mannitol, lactitol and maltitol in vitro. Is required for sorbitol metabolism. Cannot use NADP(+) as the electron acceptor. This chain is Sorbitol dehydrogenase (SDH), found in Arabidopsis thaliana (Mouse-ear cress).